Here is a 391-residue protein sequence, read N- to C-terminus: Na(+)/H(+) antiporter NhaA (391 aa).

A run of 11 helical transmembrane segments spans residues 14-34 (AGGILLLVAVVFAMLMANSPL), 59-79 (LLLWINDGLMALFFLLIGLEV), 95-115 (SLPSFAAIGGMLVPAGIYLLF), 124-144 (AGWAIPAATDIAFALGIMALL), 154-174 (VFLLALAIIDDLGVIVIIALF), 177-197 (SDLSTISLAIASVAILGLVGL), 213-233 (LILWVAVLKSGVHATLAGVII), 261-281 (FLILPVFAFANAGVALGNMSL), 290-310 (IGIALGLILGKPIGVMLFSFI), 328-348 (IAPVAAMCGIGFTMSMFIASL), and 363-383 (LGTLIGSFIAALVGYFWLSKV).

It belongs to the NhaA Na(+)/H(+) (TC 2.A.33) antiporter family.

The protein resides in the cell inner membrane. The enzyme catalyses Na(+)(in) + 2 H(+)(out) = Na(+)(out) + 2 H(+)(in). Functionally, na(+)/H(+) antiporter that extrudes sodium in exchange for external protons. This chain is Na(+)/H(+) antiporter NhaA, found in Shewanella putrefaciens (strain CN-32 / ATCC BAA-453).